A 1247-amino-acid polypeptide reads, in one-letter code: F-box/WD repeat-containing protein A (1247 aa).

Positions 1 to 214 (MQYVNGNDIS…PATVSGRLAK (214 aa)) constitute an START domain. Disordered stretches follow at residues 484–514 (GNKDGNVVSSKNKRKRNKNNENKNNNNDNII) and 552–576 (QQPQQQQQQPQEQQQNHSQLKKEIK). The segment covering 552-566 (QQPQQQQQQPQEQQQ) has biased composition (low complexity). Residues 631–677 (NSGFDNLPEEVVQIIFSNLSAINIVNLSLVCKRFKMATDSPILWKNL) enclose the F-box domain. Disordered regions lie at residues 697-744 (SNLS…QQQQ) and 833-856 (GQESPINKNSSDNPKPNAYNKRDN). 2 stretches are compositionally biased toward low complexity: residues 707 to 719 (NSNSGDSADGSSS) and 726 to 744 (QQQNQQQNQQQNQQQQQQQ). Positions 833 to 846 (GQESPINKNSSDNP) are enriched in polar residues. 7 WD repeats span residues 895 to 934 (GHNRAIKAVKSEGNSAITVSTEKKIKFWNLNTGQCIGDYE), 945 to 984 (DHTQKSSCIWPLSDYTKVHIGHKNGTVTMVDFIEQPIEVI), 988 to 1025 (RPTNLADGFDFTFPGKYLIWEHTIIHYWDVETSTLLWN), 1029 to 1073 (AHTK…CINT), 1076 to 1114 (GHSYAVNCIEPIGDYMALTGSTDKTLKLWDLRQASTFIS), 1119 to 1158 (KHTGPIRCISYQEKNGIVLSGSDDGSIIAFNLDNWNLSNI), and 1218 to 1247 (NHESAVTCIESDEAGFISGSQNGLVLRWDF).

In terms of assembly, component of an SCF complex including at least culA. Formation of this complex appears to require activity of the MAP kinase erk2. Interacts with regA.

Its function is as follows. Substrate recognition component of a SCF (SKP1-CUL1-F-box protein) E3 ubiquitin-protein ligase complex which mediates the ubiquitination and subsequent proteasomal degradation of target proteins. May target the cAMP phosphodiesterase regA for degradation leading to an increase in cAMP and PKA activity. Promotes development of prestalk cells as opposed to prespores within the developing fruiting body. Required for culmination and fruiting body development. In Dictyostelium discoideum (Social amoeba), this protein is F-box/WD repeat-containing protein A (fbxA).